The following is a 127-amino-acid chain: Mitochondrial pyruvate carrier 2 (127 aa).

At 2-40 (AAAGARGLRATYHRLMDKVELLLPKKLRPLYNHPAGPRT) the chain is on the mitochondrial matrix side. K26 is subject to N6-acetyllysine. Residues 41 to 61 (VFFWAPIMKWGLVCAGLADMA) form a helical membrane-spanning segment. Residues 62–72 (RPAEKLSTAQS) lie on the Mitochondrial intermembrane side of the membrane. The helical transmembrane segment at 73-90 (TVLMATGFIWSRYSLVII) threads the bilayer. Over 91–95 (PKNWS) the chain is Mitochondrial matrix. A helical membrane pass occupies residues 96-115 (LFAVNFFVGSAGASQLFRIW). Over 116–127 (KYNQELKSKGIQ) the chain is Mitochondrial intermembrane.

This sequence belongs to the mitochondrial pyruvate carrier (MPC) (TC 2.A.105) family. In terms of assembly, homodimer. Homooligomer. Forms heterodimers with MPC1 and MPC1L. The heterodimer is the more stable and dominant form. In terms of tissue distribution, liver, kidney, and brain.

Its subcellular location is the mitochondrion inner membrane. It catalyses the reaction pyruvate(out) + H(+)(out) = pyruvate(in) + H(+)(in). In terms of biological role, mediates the uptake of pyruvate into mitochondria. This chain is Mitochondrial pyruvate carrier 2 (Mpc2), found in Rattus norvegicus (Rat).